We begin with the raw amino-acid sequence, 341 residues long: Anthranilate phosphoribosyltransferase (341 aa).

5-phospho-alpha-D-ribose 1-diphosphate-binding positions include G79, 82–83 (GD), T87, 89–92 (NIST), 107–115 (KHGNRAVSS), and S119. Anthranilate is bound at residue G79. Mg(2+) is bound at residue S91. N110 provides a ligand contact to anthranilate. R165 contacts anthranilate. D224 and E225 together coordinate Mg(2+).

This sequence belongs to the anthranilate phosphoribosyltransferase family. As to quaternary structure, homodimer. The cofactor is Mg(2+).

It carries out the reaction N-(5-phospho-beta-D-ribosyl)anthranilate + diphosphate = 5-phospho-alpha-D-ribose 1-diphosphate + anthranilate. Its pathway is amino-acid biosynthesis; L-tryptophan biosynthesis; L-tryptophan from chorismate: step 2/5. Its function is as follows. Catalyzes the transfer of the phosphoribosyl group of 5-phosphorylribose-1-pyrophosphate (PRPP) to anthranilate to yield N-(5'-phosphoribosyl)-anthranilate (PRA). The sequence is that of Anthranilate phosphoribosyltransferase from Bacillus cereus (strain B4264).